Reading from the N-terminus, the 283-residue chain is Aquaporin PIP2-5 (283 aa).

The next 2 membrane-spanning stretches (helical) occupy residues 37–57 and 74–94; these read AVIA…ATVI and CGGV…FILV. The NPA 1 signature appears at 106–108; it reads NPA. 3 helical membrane-spanning segments follow: residues 125–145, 167–187, and 199–219; these read ILYI…VKGF, GTGL…VFSA, and VPVL…LATI. The NPA 2 motif lies at 227-229; that stretch reads NPA. The helical transmembrane segment at 249-269 threads the bilayer; the sequence is IFWVGPFIGAAIAALYHQIVL.

Belongs to the MIP/aquaporin (TC 1.A.8) family. PIP (TC 1.A.8.11) subfamily. Expressed in roots.

The protein resides in the cell membrane. Its function is as follows. Water channel required to facilitate the transport of water across cell membrane. May play a role in root water uptake. The chain is Aquaporin PIP2-5 (PIP2-5) from Oryza sativa subsp. japonica (Rice).